The primary structure comprises 178 residues: Nicotinamide-nucleotide adenylyltransferase (178 aa).

The protein belongs to the archaeal NMN adenylyltransferase family.

It is found in the cytoplasm. The enzyme catalyses beta-nicotinamide D-ribonucleotide + ATP + H(+) = diphosphate + NAD(+). Its pathway is cofactor biosynthesis; NAD(+) biosynthesis; NAD(+) from nicotinamide D-ribonucleotide: step 1/1. The polypeptide is Nicotinamide-nucleotide adenylyltransferase (Caldivirga maquilingensis (strain ATCC 700844 / DSM 13496 / JCM 10307 / IC-167)).